Consider the following 173-residue polypeptide: Mitochondrial import inner membrane translocase subunit TIM22-1 (173 aa).

A mitochondrion-targeting transit peptide spans 1-18 (MADSSAAEPTTGASSPPV). The segment at 1-26 (MADSSAAEPTTGASSPPVASDENSTQ) is disordered. 4 consecutive transmembrane segments (helical) span residues 52 to 72 (VTSG…LGAL), 101 to 119 (SCKT…ECIV), 128 to 144 (TVNT…SMSA), and 151 to 168 (ACIG…IEKF).

This sequence belongs to the Tim17/Tim22/Tim23 family. In terms of tissue distribution, expressed in young cotyledons, roots, flowers and leaves.

It is found in the mitochondrion inner membrane. Functionally, essential core component of the TIM22 complex, a complex that mediates the import and insertion of multi-pass transmembrane proteins into the mitochondrial inner membrane. The protein is Mitochondrial import inner membrane translocase subunit TIM22-1 (TIM22-1) of Arabidopsis thaliana (Mouse-ear cress).